Reading from the N-terminus, the 282-residue chain is Tyrosine recombinase XerA (282 aa).

The region spanning 2–79 (EAINEVIEEY…ALRSYFRFEG (78 aa)) is the Core-binding (CB) domain. A Tyr recombinase domain is found at 95–271 (SLPKSLTREE…TVEHLRKAQE (177 aa)). Active-site residues include R132, K157, H223, R226, and H249. Y258 (O-(3'-phospho-DNA)-tyrosine intermediate) is an active-site residue.

The protein belongs to the 'phage' integrase family. XerA subfamily.

The protein localises to the cytoplasm. Its function is as follows. Site-specific tyrosine recombinase, which acts by catalyzing the cutting and rejoining of the recombining DNA molecules. This is Tyrosine recombinase XerA from Thermococcus onnurineus (strain NA1).